Consider the following 128-residue polypeptide: Large ribosomal subunit protein bL17 (128 aa).

Belongs to the bacterial ribosomal protein bL17 family. Part of the 50S ribosomal subunit. Contacts protein L32.

The polypeptide is Large ribosomal subunit protein bL17 (Pseudomonas syringae pv. syringae (strain B728a)).